A 589-amino-acid chain; its full sequence is Complement component C8 beta chain (589 aa).

A signal peptide spans 1–31 (MKTGAQVWRALAKSCLLCAALGCLHLPGARG). A propeptide spanning residues 32-53 (EKPDFFETNAVNGSLVRSRPVR) is cleaved from the precursor. N-linked (GlcNAc...) asparagine glycosylation occurs at asparagine 43. The 54-residue stretch at 63-116 (DCQLSTWSSWTACDPCQKKRYRHTYLLRPSQFYGELCDFSDKEVEDCVTNRACR) folds into the TSP type-1 1 domain. Cystine bridges form between cysteine 64/cysteine 99, cysteine 75/cysteine 109, cysteine 78/cysteine 115, cysteine 121/cysteine 132, cysteine 126/cysteine 145, cysteine 139/cysteine 154, and cysteine 161/cysteine 199. Residues tryptophan 69 and tryptophan 72 are each glycosylated (C-linked (Man) tryptophan). An LDL-receptor class A domain is found at 120–155 (RCEGFVCAQTGRCVNRRLLCNGDNDCGDQSDEANCR). Ca(2+) is bound by residues leucine 137, asparagine 140, aspartate 142, aspartate 144, aspartate 150, and glutamate 151. The region spanning 157-503 (IYKKCSQDME…EFQMEVSSCR (347 aa)) is the MACPF domain. A glycan (N-linked (GlcNAc...) asparagine) is linked at asparagine 242. 4 consecutive transmembrane segments (beta stranded) span residues 251–258 (SSFKFGFK), 261–268 (GLVEFGVR), 378–385 (AGGGFQIG), and 391–398 (VYLKLGVS). Cysteine 377 and cysteine 402 are joined by a disulfide. A Phosphothreonine modification is found at threonine 417. 4 cysteine pairs are disulfide-bonded: cysteine 502–cysteine 549, cysteine 504–cysteine 520, cysteine 507–cysteine 522, and cysteine 524–cysteine 533. Residues 504–534 (CAPCRNNGVPILKESRCECICPAGFQGVACE) enclose the EGF-like domain. The TSP type-1 2 domain maps to 544-587 (DGKWSCWSDWSPCSGGRKTRQRQCNNPAPQRGGSPCSGPASETL). Residues tryptophan 550 and tryptophan 553 are each glycosylated (C-linked (Man) tryptophan). The cysteines at positions 556 and 589 are disulfide-linked. The interval 556–589 (CSGGRKTRQRQCNNPAPQRGGSPCSGPASETLDC) is disordered.

This sequence belongs to the complement C6/C7/C8/C9 family. Heterotrimer of 3 chains: alpha (C8A), beta (C8B) and gamma (C8G); the alpha and gamma chains are disulfide bonded. Component of the membrane attack complex (MAC), composed of complement C5b, C6, C7, C8A, C8B, C8G and multiple copies of the pore-forming subunit C9. Post-translationally, N-glycosylated; contains one or two bound glycans. Not O-glycosylated.

The protein resides in the secreted. The protein localises to the target cell membrane. Membrane attack complex (MAC) assembly is inhibited by CD59, thereby protecting self-cells from damage during complement activation. CD59 acts by binding to the beta-haipins of C8 (C8A and C8B), forming an intermolecular beta-sheet that prevents incorporation of the multiple copies of C9 required for complete formation of the osmolytic pore. MAC assembly is also inhibited by clusterin (CLU) chaperones that inhibit polymerization of C9. Functionally, component of the membrane attack complex (MAC), a multiprotein complex activated by the complement cascade, which inserts into a target cell membrane and forms a pore, leading to target cell membrane rupture and cell lysis. The MAC is initiated by proteolytic cleavage of C5 into complement C5b in response to the classical, alternative, lectin and GZMK complement pathways. The complement pathways consist in a cascade of proteins that leads to phagocytosis and breakdown of pathogens and signaling that strengthens the adaptive immune system. C8B, together with C8A and C8G, inserts into the target membrane, but does not form pores by itself. During MAC assembly, associates with C5b, C6 and C7 to form the C5b8 intermediate complex that inserts into the target membrane and traverses the bilayer increasing membrane rigidity. The sequence is that of Complement component C8 beta chain (C8b) from Rattus norvegicus (Rat).